A 154-amino-acid polypeptide reads, in one-letter code: Large ribosomal subunit protein bL9 (154 aa).

Belongs to the bacterial ribosomal protein bL9 family.

Binds to the 23S rRNA. The protein is Large ribosomal subunit protein bL9 of Buchnera aphidicola subsp. Baizongia pistaciae (strain Bp).